The chain runs to 214 residues: Adenylate kinase (214 aa).

10-15 (GAGKGT) provides a ligand contact to ATP. The segment at 30–59 (STGDMLRAAVKAGTPLGLEAKKVMDAGQLV) is NMP. Residues threonine 31, arginine 36, 57–59 (QLV), 85–88 (GFPR), and glutamine 92 each bind AMP. Residues 122 to 159 (GRRVHPGSGRVYHVVFNPPKVEGKDDVTGEDLAIRPDD) form an LID region. Residues arginine 123 and 132 to 133 (VY) each bind ATP. AMP-binding residues include arginine 156 and arginine 167. Glutamine 200 serves as a coordination point for ATP.

Belongs to the adenylate kinase family. As to quaternary structure, monomer.

The protein localises to the cytoplasm. It carries out the reaction AMP + ATP = 2 ADP. It participates in purine metabolism; AMP biosynthesis via salvage pathway; AMP from ADP: step 1/1. Catalyzes the reversible transfer of the terminal phosphate group between ATP and AMP. Plays an important role in cellular energy homeostasis and in adenine nucleotide metabolism. This Shewanella sp. (strain ANA-3) protein is Adenylate kinase.